The chain runs to 553 residues: Phosphoglucomutase (553 aa).

A disordered region spans residues 1 to 25 (MQATIKRYPTSPISGQTLGTSGLRK). A compositionally biased stretch (polar residues) spans 11–20 (SPISGQTLGT). Substrate contacts are provided by residues threonine 20, arginine 24, 117–118 (SH), and lysine 131. Serine 117 (phosphoserine intermediate) is an active-site residue. Serine 117 provides a ligand contact to Mg(2+). 3 residues coordinate Mg(2+): aspartate 289, aspartate 291, and aspartate 293. Substrate contacts are provided by residues 293–294 (DR), threonine 352, 371–373 (EES), lysine 384, and arginine 509.

The protein belongs to the phosphohexose mutase family. It depends on Mg(2+) as a cofactor.

The protein localises to the cytoplasm. The catalysed reaction is alpha-D-glucose 1-phosphate = alpha-D-glucose 6-phosphate. Functionally, catalyzes the reversible conversion of glucose 1-phosphate into glucose 6-phosphate. This enzyme participates in both the breakdown and synthesis of glucose. This Entamoeba histolytica (strain ATCC 30459 / HM-1:IMSS / ABRM) protein is Phosphoglucomutase.